The primary structure comprises 314 residues: Hydroxyacyl-coenzyme A dehydrogenase, mitochondrial (314 aa).

A mitochondrion-targeting transit peptide spans 1–12 (MAFVTRQFLRSM). Residues 34–39 (GGGLMG) and aspartate 57 each bind NAD(+). Serine 73 provides a ligand contact to CoA. Lysine 75 bears the N6-acetyllysine mark. Lysine 80 lines the CoA pocket. N6-succinyllysine is present on lysine 80. N6-acetyllysine; alternate is present on residues lysine 81 and lysine 87. Residues lysine 81 and lysine 87 each carry the N6-succinyllysine; alternate modification. Glutamate 122 contacts NAD(+). Lysine 125 carries the N6-acetyllysine modification. Lysine 127 lines the NAD(+) pocket. Lysine 127 is modified (N6-(2-hydroxyisobutyryl)lysine). Lysine 136 is subject to N6-acetyllysine; alternate. An N6-succinyllysine; alternate modification is found at lysine 136. NAD(+) contacts are provided by serine 149 and asparagine 173. Serine 149 lines the CoA pocket. Lysine 179 bears the N6-acetyllysine mark. Residues lysine 185, lysine 192, and lysine 202 each carry the N6-acetyllysine; alternate modification. An N6-succinyllysine; alternate mark is found at lysine 185, lysine 192, and lysine 202. Position 206 is an N6-succinyllysine (lysine 206). Lysine 212 and lysine 241 each carry N6-acetyllysine; alternate. N6-succinyllysine; alternate is present on residues lysine 212 and lysine 241. Lysine 305 is a binding site for NAD(+). Lysine 312 is modified (N6-acetyllysine; alternate). The residue at position 312 (lysine 312) is an N6-succinyllysine; alternate.

The protein belongs to the 3-hydroxyacyl-CoA dehydrogenase family. Homodimer. Interacts with GLUD1; this interaction inhibits the activation of glutamate dehydrogenase 1 (GLUD1). In terms of processing, succinylation at Lys-81, adjacent to a coenzyme A binding site. Desuccinylated by SIRT5. Expressed in liver, kidney, brain, and pancreatic islets.

Its subcellular location is the mitochondrion matrix. It is found in the nucleus. The protein resides in the cytoplasm. It localises to the cytosol. It catalyses the reaction a (3S)-3-hydroxyacyl-CoA + NAD(+) = a 3-oxoacyl-CoA + NADH + H(+). The catalysed reaction is (3S)-3-hydroxybutanoyl-CoA + NAD(+) = acetoacetyl-CoA + NADH + H(+). The enzyme catalyses (3S)-hydroxydecanoyl-CoA + NAD(+) = 3-oxodecanoyl-CoA + NADH + H(+). It carries out the reaction (3S)-hydroxyhexadecanoyl-CoA + NAD(+) = 3-oxohexadecanoyl-CoA + NADH + H(+). It participates in lipid metabolism; fatty acid beta-oxidation. Functionally, mitochondrial fatty acid beta-oxidation enzyme that catalyzes the third step of the beta-oxidation cycle for medium and short-chain 3-hydroxy fatty acyl-CoAs (C4 to C10). Plays a role in the control of insulin secretion by inhibiting the activation of glutamate dehydrogenase 1 (GLUD1), an enzyme that has an important role in regulating amino acid-induced insulin secretion. Plays a role in the maintenance of normal spermatogenesis through the reduction of fatty acid accumulation in the testes. Its function is as follows. Inhibits cell proliferation. This is Hydroxyacyl-coenzyme A dehydrogenase, mitochondrial (Hadh) from Mus musculus (Mouse).